A 256-amino-acid polypeptide reads, in one-letter code: MELLQGKTFVVMGVANQRSIAWGIARSLHNAGAKLIFTYAGERLERNVRELADTLEGQESLVLPCDVTNDEELTACFETIKQEVGTIHGVAHCIAFANRDDLKGEFVDTSRDGFLLAQNISAFSLTAVAREAKKVMTEGGNILTLTYLGGERVVKNYNVMGVAKASLEASVKYLANDLGQHGIRVNAISAGPIRTLSAKGVGDFNSILREIEERAPLRRTTTQEEVGDTAVFLFSDLARGVTGENIHVDSGYHILG.

Residues Gly-13, 19-20 (SI), 66-67 (DV), and Ile-94 each bind NAD(+). Ala-97 contacts substrate. Catalysis depends on proton acceptor residues Tyr-147 and Tyr-157. NAD(+)-binding positions include Lys-164 and 193–197 (IRTLS).

This sequence belongs to the short-chain dehydrogenases/reductases (SDR) family. FabI subfamily. As to quaternary structure, homotetramer.

It carries out the reaction a 2,3-saturated acyl-[ACP] + NAD(+) = a (2E)-enoyl-[ACP] + NADH + H(+). The protein operates within lipid metabolism; fatty acid biosynthesis. In terms of biological role, catalyzes the reduction of a carbon-carbon double bond in an enoyl moiety that is covalently linked to an acyl carrier protein (ACP). Involved in the elongation cycle of fatty acid which are used in the lipid metabolism. The chain is Enoyl-[acyl-carrier-protein] reductase [NADH] FabI (fabI) from Bacillus cereus (strain ATCC 14579 / DSM 31 / CCUG 7414 / JCM 2152 / NBRC 15305 / NCIMB 9373 / NCTC 2599 / NRRL B-3711).